A 48-amino-acid polypeptide reads, in one-letter code: MKRTYQPSKLKRAKTHGFLARMATASGRKVLKLRRKKQRAQLTVSSER.

It belongs to the bacterial ribosomal protein bL34 family.

The polypeptide is Large ribosomal subunit protein bL34 (rpmH) (Mycoplasma pneumoniae (strain ATCC 29342 / M129 / Subtype 1) (Mycoplasmoides pneumoniae)).